The chain runs to 295 residues: Trimeric intracellular cation channel type A (295 aa).

Residues 1 to 18 (MELLSALSLGELALSFSR) are Lumenal-facing. The chain crosses the membrane as a helical span at residues 19–39 (VPLFPVFDLSYFIVSILYLKY). The Cytoplasmic segment spans residues 40-51 (EPGAVELSRRHP). Residues 52-72 (VASWLCAMLHCFGSYILADLL) form a helical membrane-spanning segment. Residues 73–85 (LGEPLIDYFSNNS) are Lumenal-facing. Gly74 provides a ligand contact to Ca(2+). A helical transmembrane segment spans residues 86–106 (SILLASAVWYLIFFCPLDLFY). The Cytoplasmic portion of the chain corresponds to 107–144 (KCVCFLPVKLIFVAMKEVVRVRKIAVGIHHAHHHYHHG). A 1,2-diacyl-sn-glycero-3-phospho-(1D-myo-inositol-4,5-bisphosphate) is bound by residues Lys122 and Arg126. Residues 145–165 (WFIMIATGWVKGSGVALLSNV) traverse the membrane as a helical segment. Topologically, residues 166-178 (EQLLRGVWKPETN) are lumenal. A helical transmembrane segment spans residues 179 to 199 (EILHMSFPTKASLYGAILFTL). The Cytoplasmic segment spans residues 200 to 209 (QQTRWLPVSK). A helical membrane pass occupies residues 210–230 (ASLIFIFTMFMVSCKVFLTAT). Topologically, residues 231–234 (HSHS) are lumenal. The chain crosses the membrane as a helical span at residues 235 to 255 (SPFDVLEAYVCPVLFGTGSGG). Over 256–295 (DHPQDNHGAWPGGPPSGALATKSKEELSEGSRKKKTKKAD) the chain is Cytoplasmic. Positions 256 to 295 (DHPQDNHGAWPGGPPSGALATKSKEELSEGSRKKKTKKAD) are disordered. A compositionally biased stretch (basic and acidic residues) spans 277-286 (KSKEELSEGS).

This sequence belongs to the TMEM38 family. In terms of assembly, homotrimer; conformation seems to be controled by binding to diacylglycerol (DAG).

Its subcellular location is the sarcoplasmic reticulum membrane. The protein localises to the nucleus membrane. The enzyme catalyses K(+)(in) = K(+)(out). With respect to regulation, channel activity is activated by a change of voltage within the sarcoplasmic reticulum lumen and blocked by luminal high Ca(2+) levels. Functionally, intracellular monovalent cation channel required for maintenance of rapid intracellular calcium release. Acts as a potassium counter-ion channel that functions in synchronization with calcium release from intracellular stores. Opened by a change of voltage within the sarcoplasmic reticulum lumen. The protein is Trimeric intracellular cation channel type A of Oryctolagus cuniculus (Rabbit).